The sequence spans 101 residues: Small ribosomal subunit protein uS14 (101 aa).

It belongs to the universal ribosomal protein uS14 family. Part of the 30S ribosomal subunit. Contacts proteins S3 and S10.

Functionally, binds 16S rRNA, required for the assembly of 30S particles and may also be responsible for determining the conformation of the 16S rRNA at the A site. This is Small ribosomal subunit protein uS14 from Bartonella bacilliformis (strain ATCC 35685 / KC583 / Herrer 020/F12,63).